The sequence spans 284 residues: Large ribosomal subunit protein uL2 (284 aa).

Disordered stretches follow at residues 28-50 (ELEG…FKKS) and 232-284 (RGTA…DRRK). Positions 36 to 46 (RSVRPNKKLSF) are enriched in basic residues. The span at 240–250 (DHPHGGGEGRH) shows a compositional bias: basic and acidic residues. Residues 264–284 (KGLKTRDKRKSNKWIVKDRRK) are compositionally biased toward basic residues.

It belongs to the universal ribosomal protein uL2 family. Part of the 50S ribosomal subunit. Forms a bridge to the 30S subunit in the 70S ribosome.

Functionally, one of the primary rRNA binding proteins. Required for association of the 30S and 50S subunits to form the 70S ribosome, for tRNA binding and peptide bond formation. It has been suggested to have peptidyltransferase activity; this is somewhat controversial. Makes several contacts with the 16S rRNA in the 70S ribosome. In Chlamydia muridarum (strain MoPn / Nigg), this protein is Large ribosomal subunit protein uL2.